The primary structure comprises 120 residues: MKYNYTVLLSAFTMSVLYSVIYIHSFIIAALITMAFYFLFPYLIFALPLQIMMNKKPKRFSPLYLLYYLAAAFIANAIIFGMLQPSGQSLFQNTAFYLFAVLTALIYWIWDSVLLQKKEA.

A run of 4 helical transmembrane segments spans residues 3-23 (YNYTVLLSAFTMSVLYSVIYI), 26-46 (FIIAALITMAFYFLFPYLIFA), 63-83 (LYLLYYLAAAFIANAIIFGML), and 95-115 (AFYLFAVLTALIYWIWDSVLL).

The protein belongs to the UPF0715 family.

The protein localises to the cell membrane. The protein is UPF0715 membrane protein YwlA (ywlA) of Bacillus subtilis (strain 168).